Reading from the N-terminus, the 1030-residue chain is uncharacterized protein (1030 aa).

Polar residues predominate over residues 1–15; sequence MSENSTDSKNFQFSE. A disordered region spans residues 1–53; it reads MSENSTDSKNFQFSEGSRESSNDELKVLLRDTETKEDEKSSFSNSEEESIIEN. Over residues 16–40 the composition is skewed to basic and acidic residues; that stretch reads GSRESSNDELKVLLRDTETKEDEKS. S41 is modified (phosphoserine). Residues 134 to 290 form the Helicase ATP-binding domain; it reads IKCVERMESV…WISEIHKQPC (157 aa). 147–154 is an ATP binding site; sequence AHTSAGKT. A DEVH box motif is present at residues 238–241; it reads DEVH. Residues 357–561 form the Helicase C-terminal domain; it reads SLERIINMVL…GMILNLMRIE (205 aa).

This sequence belongs to the helicase family. SKI2 subfamily.

It localises to the nucleus. This is an uncharacterized protein from Schizosaccharomyces pombe (strain 972 / ATCC 24843) (Fission yeast).